The sequence spans 115 residues: Probable malate:quinone oxidoreductase (115 aa).

A disordered region spans residues 88–115 (QMPAAAPTATAKPAETPREASPQHDMAL). Residues 90–101 (PAAAPTATAKPA) are compositionally biased toward low complexity. Residues 102-115 (ETPREASPQHDMAL) are compositionally biased toward basic and acidic residues.

The protein belongs to the MQO family. FAD is required as a cofactor.

The enzyme catalyses (S)-malate + a quinone = a quinol + oxaloacetate. The protein operates within carbohydrate metabolism; tricarboxylic acid cycle; oxaloacetate from (S)-malate (quinone route): step 1/1. This Klebsiella pneumoniae protein is Probable malate:quinone oxidoreductase (mqo).